We begin with the raw amino-acid sequence, 149 residues long: Large ribosomal subunit protein bL9 (149 aa).

This sequence belongs to the bacterial ribosomal protein bL9 family.

Binds to the 23S rRNA. In Helicobacter acinonychis (strain Sheeba), this protein is Large ribosomal subunit protein bL9.